Here is a 310-residue protein sequence, read N- to C-terminus: Acetyl-coenzyme A carboxylase carboxyl transferase subunit beta (310 aa).

One can recognise a CoA carboxyltransferase N-terminal domain in the interval 27–296 (LWKKCPKCSA…PEFENEEELE (270 aa)). 4 residues coordinate Zn(2+): Cys31, Cys34, Cys50, and Cys53. A C4-type zinc finger spans residues 31-53 (CPKCSAVLYRPELEKNLDVCPKC). The disordered stretch occupies residues 285 to 310 (PEPEFENEEELEEEEMERPEPPDNVE). A compositionally biased stretch (acidic residues) spans 287-310 (PEFENEEELEEEEMERPEPPDNVE).

This sequence belongs to the AccD/PCCB family. As to quaternary structure, acetyl-CoA carboxylase is a heterohexamer composed of biotin carboxyl carrier protein (AccB), biotin carboxylase (AccC) and two subunits each of ACCase subunit alpha (AccA) and ACCase subunit beta (AccD). It depends on Zn(2+) as a cofactor.

It is found in the cytoplasm. The catalysed reaction is N(6)-carboxybiotinyl-L-lysyl-[protein] + acetyl-CoA = N(6)-biotinyl-L-lysyl-[protein] + malonyl-CoA. It participates in lipid metabolism; malonyl-CoA biosynthesis; malonyl-CoA from acetyl-CoA: step 1/1. Functionally, component of the acetyl coenzyme A carboxylase (ACC) complex. Biotin carboxylase (BC) catalyzes the carboxylation of biotin on its carrier protein (BCCP) and then the CO(2) group is transferred by the transcarboxylase to acetyl-CoA to form malonyl-CoA. This Hahella chejuensis (strain KCTC 2396) protein is Acetyl-coenzyme A carboxylase carboxyl transferase subunit beta.